The sequence spans 449 residues: UDP-N-acetylmuramoylalanine--D-glutamate ligase (449 aa).

Position 119 to 125 (119 to 125) interacts with ATP; it reads GTNGKTT.

Belongs to the MurCDEF family.

It localises to the cytoplasm. The enzyme catalyses UDP-N-acetyl-alpha-D-muramoyl-L-alanine + D-glutamate + ATP = UDP-N-acetyl-alpha-D-muramoyl-L-alanyl-D-glutamate + ADP + phosphate + H(+). The protein operates within cell wall biogenesis; peptidoglycan biosynthesis. Cell wall formation. Catalyzes the addition of glutamate to the nucleotide precursor UDP-N-acetylmuramoyl-L-alanine (UMA). The sequence is that of UDP-N-acetylmuramoylalanine--D-glutamate ligase from Lactococcus lactis subsp. cremoris (strain MG1363).